Consider the following 367-residue polypeptide: UDP-N-acetylglucosamine--N-acetylmuramyl-(pentapeptide) pyrophosphoryl-undecaprenol N-acetylglucosamine transferase (367 aa).

Residues 15–17 (TGG), N127, R163, S191, I249, and Q294 each bind UDP-N-acetyl-alpha-D-glucosamine.

Belongs to the glycosyltransferase 28 family. MurG subfamily.

The protein localises to the cell inner membrane. The catalysed reaction is di-trans,octa-cis-undecaprenyl diphospho-N-acetyl-alpha-D-muramoyl-L-alanyl-D-glutamyl-meso-2,6-diaminopimeloyl-D-alanyl-D-alanine + UDP-N-acetyl-alpha-D-glucosamine = di-trans,octa-cis-undecaprenyl diphospho-[N-acetyl-alpha-D-glucosaminyl-(1-&gt;4)]-N-acetyl-alpha-D-muramoyl-L-alanyl-D-glutamyl-meso-2,6-diaminopimeloyl-D-alanyl-D-alanine + UDP + H(+). Its pathway is cell wall biogenesis; peptidoglycan biosynthesis. In terms of biological role, cell wall formation. Catalyzes the transfer of a GlcNAc subunit on undecaprenyl-pyrophosphoryl-MurNAc-pentapeptide (lipid intermediate I) to form undecaprenyl-pyrophosphoryl-MurNAc-(pentapeptide)GlcNAc (lipid intermediate II). This chain is UDP-N-acetylglucosamine--N-acetylmuramyl-(pentapeptide) pyrophosphoryl-undecaprenol N-acetylglucosamine transferase, found in Burkholderia multivorans (strain ATCC 17616 / 249).